We begin with the raw amino-acid sequence, 401 residues long: Argininosuccinate synthase (401 aa).

Residues 11 to 19 (AYSGGLDTS) and alanine 38 contribute to the ATP site. The L-citrulline site is built by tyrosine 89 and serine 94. Position 119 (glycine 119) interacts with ATP. Residues threonine 121, asparagine 125, and aspartate 126 each coordinate L-aspartate. Residue asparagine 125 coordinates L-citrulline. L-citrulline is bound by residues arginine 129, serine 177, serine 186, glutamate 262, and tyrosine 274.

Belongs to the argininosuccinate synthase family. Type 1 subfamily. As to quaternary structure, homotetramer.

The protein localises to the cytoplasm. It carries out the reaction L-citrulline + L-aspartate + ATP = 2-(N(omega)-L-arginino)succinate + AMP + diphosphate + H(+). Its pathway is amino-acid biosynthesis; L-arginine biosynthesis; L-arginine from L-ornithine and carbamoyl phosphate: step 2/3. This is Argininosuccinate synthase from Nitratidesulfovibrio vulgaris (strain DSM 19637 / Miyazaki F) (Desulfovibrio vulgaris).